Here is an 81-residue protein sequence, read N- to C-terminus: MAIKKNNFEEQLNELQEIVNKLESGNVPLEDALSEFQAGVKLSRELEKKLNDAEQTVAKLVDKDGNEKALDPQNASAPEEE.

Basic and acidic residues predominate over residues 60–70 (LVDKDGNEKAL). The interval 60–81 (LVDKDGNEKALDPQNASAPEEE) is disordered.

The protein belongs to the XseB family. In terms of assembly, heterooligomer composed of large and small subunits.

The protein localises to the cytoplasm. The enzyme catalyses Exonucleolytic cleavage in either 5'- to 3'- or 3'- to 5'-direction to yield nucleoside 5'-phosphates.. In terms of biological role, bidirectionally degrades single-stranded DNA into large acid-insoluble oligonucleotides, which are then degraded further into small acid-soluble oligonucleotides. This is Exodeoxyribonuclease 7 small subunit from Lactobacillus johnsonii (strain CNCM I-12250 / La1 / NCC 533).